The primary structure comprises 962 residues: Glycine dehydrogenase (decarboxylating) (962 aa).

Lys709 carries the N6-(pyridoxal phosphate)lysine modification.

It belongs to the GcvP family. In terms of assembly, the glycine cleavage system is composed of four proteins: P, T, L and H. Requires pyridoxal 5'-phosphate as cofactor.

The enzyme catalyses N(6)-[(R)-lipoyl]-L-lysyl-[glycine-cleavage complex H protein] + glycine + H(+) = N(6)-[(R)-S(8)-aminomethyldihydrolipoyl]-L-lysyl-[glycine-cleavage complex H protein] + CO2. The glycine cleavage system catalyzes the degradation of glycine. The P protein binds the alpha-amino group of glycine through its pyridoxal phosphate cofactor; CO(2) is released and the remaining methylamine moiety is then transferred to the lipoamide cofactor of the H protein. This is Glycine dehydrogenase (decarboxylating) from Shewanella frigidimarina (strain NCIMB 400).